Consider the following 91-residue polypeptide: Large ribosomal subunit protein eL43 (91 aa).

Residues 39–60 (CPFCGKDAMRRGAVGIWNCSKC) form a C4-type zinc finger.

The protein belongs to the eukaryotic ribosomal protein eL43 family.

The chain is Large ribosomal subunit protein eL43 (rpl-37a) from Ostertagia ostertagi (Brown stomach worm).